Here is a 1456-residue protein sequence, read N- to C-terminus: ABC transporter G family member 44 (1456 aa).

An ABC transporter 1 domain is found at 169 to 442 (ANLLHVVPNK…FESMGFKCPD (274 aa)). 202 to 209 (GPPGSGKT) contributes to the ATP binding site. The region spanning 520-733 (ELLRTCIARE…AMNAIAVNEF (214 aa)) is the ABC transmembrane type-2 1 domain. The next 6 helical transmembrane spans lie at 538–558 (FVYR…MTLF), 571–591 (GIVY…NGFS), 626–646 (IPIS…VIGF), 658–678 (LLLL…AALG), 682–702 (VVAN…SGFI), and 768–788 (IGVG…TIAL). The segment at 812–844 (NITGETINDPRNSASSGQTTNTRRNAAPGEASE) is disordered. A compositionally biased stretch (polar residues) spans 814–835 (TGETINDPRNSASSGQTTNTRR). The ABC transporter 2 domain occupies 858-1110 (VAFNNIRYSV…DLIEYFEGVE (253 aa)). Residue 903-910 (GVSGAGKT) participates in ATP binding. An ABC transmembrane type-2 2 domain is found at 1183–1397 (TQCMACLWKQ…TLYGLVASQF (215 aa)). 7 helical membrane passes run 1202-1222 (YTVV…TIFW), 1242-1262 (YAAV…VVAV), 1290-1310 (LPYV…MIGF), 1317-1337 (FFWY…YGML), 1347-1367 (IASI…GFVI), 1378-1398 (WYSW…SQFG), and 1425-1445 (FLGV…VSFS).

This sequence belongs to the ABC transporter superfamily. ABCG family. PDR (TC 3.A.1.205) subfamily.

The protein localises to the membrane. In terms of biological role, may be a general defense protein. The protein is ABC transporter G family member 44 of Oryza sativa subsp. japonica (Rice).